Here is a 216-residue protein sequence, read N- to C-terminus: Thiopurine S-methyltransferase (216 aa).

The S-adenosyl-L-methionine site is built by W11, L46, E67, and R122.

The protein belongs to the class I-like SAM-binding methyltransferase superfamily. TPMT family.

It localises to the cytoplasm. It catalyses the reaction S-adenosyl-L-methionine + a thiopurine = S-adenosyl-L-homocysteine + a thiopurine S-methylether.. The protein is Thiopurine S-methyltransferase of Vibrio parahaemolyticus serotype O3:K6 (strain RIMD 2210633).